Here is a 242-residue protein sequence, read N- to C-terminus: Protein HTATIP2 (242 aa).

Position 2 is an N-acetylalanine (Ala2). A required for interaction with elongation factor EEF1A1 region spans residues 2–25 (ADKETLLKLREDFKMQNKSVFILG). 12 residues coordinate NADPH: Ser27, Gly28, Glu29, Thr30, Arg52, Arg53, Leu92, Gly93, Tyr143, Lys147, Leu170, and Arg178. Tyr143 (proton acceptor) is an active-site residue. The active site involves Lys147.

In terms of assembly, monomer. Forms homodimers during oxidative stress. Interacts (via N-terminus) with elongation factor EEF1A1 (via middle-region); the interaction is direct and competes with EEF1A1 binding to guanyl-nucleotide exchange factor EEF1B2, thereby inhibiting GDP for GTP exchange and reactivation of EEF1A1. Interacts with nuclear transport receptors XPO4, IPO5/RANBP5, IPO7, IPO9 and KPNB1 as well as GCN1L1/GCN1 and LRPPRC probably through their HEAT repeats. Binds NCOA5/CIA.

Represses translation by preventing reactivation of elongation factor eEF1A. May also inhibit nuclear import by competing with nuclear import substrates for binding to a subset of nuclear transport receptors. Has additionally been proposed to act as a redox sensor involved in cellular oxidative stress surveillance. May bind NADPH. The sequence is that of Protein HTATIP2 from Rattus norvegicus (Rat).